Reading from the N-terminus, the 580-residue chain is Long-chain-fatty-acid--AMP ligase FadD28 (580 aa).

The tract at residues 421-440 is disordered; it reads SERTFGGKIVTPSPGTPEGP.

It belongs to the ATP-dependent AMP-binding enzyme family.

The catalysed reaction is holo-[mycocerosate synthase] + a long-chain fatty acid + ATP = a long-chain fatty acyl-[mycocerosate synthase] + AMP + diphosphate. The enzyme catalyses a long-chain fatty acid + ATP + H(+) = a long-chain fatty acyl-AMP + diphosphate. It carries out the reaction holo-[mycocerosate synthase] + a long-chain fatty acyl-AMP = a long-chain fatty acyl-[mycocerosate synthase] + AMP + H(+). Its pathway is lipid metabolism; fatty acid biosynthesis. Its function is as follows. Involved in the biosynthesis of phthiocerol dimycocerosate (PDIM), a cell wall-associated lipid found only in pathogenic mycobacteria. Catalyzes the activation of long-chain fatty acids as acyl-adenylates (acyl-AMP), which are then transferred to the multifunctional polyketide synthase Mas for further chain extension. The chain is Long-chain-fatty-acid--AMP ligase FadD28 (fadD28) from Mycobacterium tuberculosis (strain CDC 1551 / Oshkosh).